A 180-amino-acid chain; its full sequence is MLLVGRIGKSVGLNGGLKLHLESDFPECLKKGVKVSVAPLNAFSHASFKDYVIHSYEHAKNLLFLETINTPEMARELTNLGLFMSETESKKLCVLKEGEFFYCDLIGLSVVEENEILGKVIEIQRISHIDYFMVETTLNLVEKGLAKIFLIPYRDFYIKEILLQDKKITTNNAKTLLENS.

Residues 97-176 enclose the PRC barrel domain; it reads EGEFFYCDLI…KITTNNAKTL (80 aa).

This sequence belongs to the RimM family. As to quaternary structure, binds ribosomal protein uS19.

It is found in the cytoplasm. Functionally, an accessory protein needed during the final step in the assembly of 30S ribosomal subunit, possibly for assembly of the head region. Essential for efficient processing of 16S rRNA. May be needed both before and after RbfA during the maturation of 16S rRNA. It has affinity for free ribosomal 30S subunits but not for 70S ribosomes. In Helicobacter acinonychis (strain Sheeba), this protein is Ribosome maturation factor RimM.